The primary structure comprises 200 residues: Exopolysaccharide production protein PSS (200 aa).

The protein belongs to the bacterial sugar transferase family.

In Rhizobium leguminosarum bv. phaseoli, this protein is Exopolysaccharide production protein PSS (pss).